We begin with the raw amino-acid sequence, 493 residues long: Probable malate:quinone oxidoreductase (493 aa).

It belongs to the MQO family. FAD serves as cofactor.

It catalyses the reaction (S)-malate + a quinone = a quinol + oxaloacetate. It functions in the pathway carbohydrate metabolism; tricarboxylic acid cycle; oxaloacetate from (S)-malate (quinone route): step 1/1. This chain is Probable malate:quinone oxidoreductase, found in Mycobacterium marinum (strain ATCC BAA-535 / M).